Consider the following 169-residue polypeptide: UPF0303 protein Oant_1766 (169 aa).

This sequence belongs to the UPF0303 family.

This Brucella anthropi (strain ATCC 49188 / DSM 6882 / CCUG 24695 / JCM 21032 / LMG 3331 / NBRC 15819 / NCTC 12168 / Alc 37) (Ochrobactrum anthropi) protein is UPF0303 protein Oant_1766.